The following is a 240-amino-acid chain: Uridylate kinase (240 aa).

Residue 12–15 coordinates ATP; it reads KLSG. Gly54 is a UMP binding site. ATP contacts are provided by Gly55 and Arg59. Residues Asp74 and 135–142 each bind UMP; that span reads TGNPFFTT. The ATP site is built by Thr162, Tyr168, and Asp171.

Belongs to the UMP kinase family. Homohexamer.

Its subcellular location is the cytoplasm. It catalyses the reaction UMP + ATP = UDP + ADP. It functions in the pathway pyrimidine metabolism; CTP biosynthesis via de novo pathway; UDP from UMP (UMPK route): step 1/1. Inhibited by UTP. Catalyzes the reversible phosphorylation of UMP to UDP. The polypeptide is Uridylate kinase (Xanthomonas campestris pv. campestris (strain ATCC 33913 / DSM 3586 / NCPPB 528 / LMG 568 / P 25)).